A 309-amino-acid polypeptide reads, in one-letter code: MAVSVQDLLDKIHFHVIYSTETALQKEITTSEIMRPGLEMAGYFDYFTPERIQLFGMKEWSYMMTVVGDNRYDLLKKVMAKETPVVIVARNLEIPSEMVAAAKKSDIVLLQSREATSRLNSVLTSFLDERLAERTTVHGVLMDIFGVGVLIQGASGIGKSETGLELVKRGHRLVADDRVDVFQRDAFTLSGEPAEILRNMIEIRGVGIIDVMSLFGAGAVKDSTDIDMAIYLEYYDKEKAFDRLGNAPTIVEFSDVEVPQTRIPVKTGRNVSVIVEAAVMNFRAKQMGFDATKTFEDRLTDLISHNKES.

Active-site residues include His138 and Lys159. An ATP-binding site is contributed by 153 to 160 (GASGIGKS). Ser160 serves as a coordination point for Mg(2+). Catalysis depends on Asp177, which acts as the Proton acceptor; for phosphorylation activity. Proton donor; for dephosphorylation activity. Residues 201 to 210 (IEIRGVGIID) form an important for the catalytic mechanism of both phosphorylation and dephosphorylation region. Position 202 (Glu202) interacts with Mg(2+). Arg243 is a catalytic residue. Residues 264 to 269 (PVKTGR) are important for the catalytic mechanism of dephosphorylation.

The protein belongs to the HPrK/P family. Homohexamer. Mg(2+) is required as a cofactor.

The catalysed reaction is [HPr protein]-L-serine + ATP = [HPr protein]-O-phospho-L-serine + ADP + H(+). The enzyme catalyses [HPr protein]-O-phospho-L-serine + phosphate + H(+) = [HPr protein]-L-serine + diphosphate. Functionally, catalyzes the ATP- as well as the pyrophosphate-dependent phosphorylation of a specific serine residue in HPr, a phosphocarrier protein of the phosphoenolpyruvate-dependent sugar phosphotransferase system (PTS). HprK/P also catalyzes the pyrophosphate-producing, inorganic phosphate-dependent dephosphorylation (phosphorolysis) of seryl-phosphorylated HPr (P-Ser-HPr). The two antagonistic activities of HprK/P are regulated by several intracellular metabolites, which change their concentration in response to the absence or presence of rapidly metabolisable carbon sources (glucose, fructose, etc.) in the growth medium. Therefore, by controlling the phosphorylation state of HPr, HPrK/P is a sensor enzyme that plays a major role in the regulation of carbon metabolism and sugar transport: it mediates carbon catabolite repression (CCR), and regulates PTS-catalyzed carbohydrate uptake and inducer exclusion. The polypeptide is HPr kinase/phosphorylase (Lactococcus lactis subsp. lactis (strain IL1403) (Streptococcus lactis)).